Consider the following 324-residue polypeptide: Arginase (324 aa).

Positions 115, 142, 144, and 146 each coordinate Mn(2+). Residues 144–148, 155–157, and Asp-196 contribute to the substrate site; these read HTDLH and SGN. Asp-244 and Asp-246 together coordinate Mn(2+). The substrate site is built by Thr-258 and Glu-289.

Belongs to the arginase family. As to quaternary structure, homohexamer. Mn(2+) is required as a cofactor.

It catalyses the reaction L-arginine + H2O = urea + L-ornithine. Its pathway is nitrogen metabolism; urea cycle; L-ornithine and urea from L-arginine: step 1/1. The protein is Arginase (arcA) of Agrobacterium fabrum (strain C58 / ATCC 33970) (Agrobacterium tumefaciens (strain C58)).